The following is a 162-amino-acid chain: uncharacterized protein (162 aa).

A signal peptide spans 1–18 (MRKTFLTLLCVSSAIAHA).

Belongs to the fimbrial protein family.

Functionally, part of the yfcOPQRSUV fimbrial operon. Could contribute to adhesion to various surfaces in specific environmental niches. Increases adhesion to eukaryotic T24 bladder epithelial cells in the absence of fim genes. This is an uncharacterized protein from Escherichia coli (strain K12).